A 129-amino-acid polypeptide reads, in one-letter code: Small ribosomal subunit protein uS11 (129 aa).

Belongs to the universal ribosomal protein uS11 family. Part of the 30S ribosomal subunit. Interacts with proteins S7 and S18. Binds to IF-3.

In terms of biological role, located on the platform of the 30S subunit, it bridges several disparate RNA helices of the 16S rRNA. Forms part of the Shine-Dalgarno cleft in the 70S ribosome. The protein is Small ribosomal subunit protein uS11 of Pseudomonas fluorescens (strain ATCC BAA-477 / NRRL B-23932 / Pf-5).